The following is a 115-amino-acid chain: Type 3 secretion system chaperone PscG (115 aa).

Belongs to the YscG family. In terms of assembly, forms a stable heterotrimeric complex with PscE and PscF/SctF in the cytoplasm. Co-stabilized by PscE.

It is found in the cytoplasm. Chaperone of the type III secretion system (T3SS), also called injectisome, which is used to inject bacterial effector proteins into eukaryotic host cells, facilitating the establishment and dissemination of infection. Along with PscE, prevents premature polymerization of the PscF/SctF needle protein within the cytoplasm. Required for type III secretion needle assembly. Also required for cytotoxicity by influencing PscF/SctF levels. The sequence is that of Type 3 secretion system chaperone PscG (pscG) from Pseudomonas aeruginosa (strain ATCC 15692 / DSM 22644 / CIP 104116 / JCM 14847 / LMG 12228 / 1C / PRS 101 / PAO1).